Reading from the N-terminus, the 93-residue chain is UPF0358 protein BPUM_1375 (93 aa).

This sequence belongs to the UPF0358 family.

The chain is UPF0358 protein BPUM_1375 from Bacillus pumilus (strain SAFR-032).